Here is a 365-residue protein sequence, read N- to C-terminus: Adenosine deaminase (365 aa).

The Zn(2+) site is built by His-19 and His-21. Residues His-21, Asp-23, and Gly-181 each coordinate substrate. Residue His-208 participates in Zn(2+) binding. Glu-211 (proton donor) is an active-site residue. Asp-300 contacts Zn(2+).

It belongs to the metallo-dependent hydrolases superfamily. Adenosine and AMP deaminases family. Adenosine deaminase subfamily. Zn(2+) serves as cofactor.

It carries out the reaction adenosine + H2O + H(+) = inosine + NH4(+). It catalyses the reaction 2'-deoxyadenosine + H2O + H(+) = 2'-deoxyinosine + NH4(+). In terms of biological role, catalyzes the hydrolytic deamination of adenosine and 2-deoxyadenosine. The sequence is that of Adenosine deaminase from Mycobacterium tuberculosis (strain ATCC 25177 / H37Ra).